Consider the following 506-residue polypeptide: BTB/POZ domain-containing protein At3g22104 (506 aa).

Positions 6–76 constitute a BTB domain; that stretch reads SDLEVDINGE…CYNDGRVAVM (71 aa). The region spanning 187–435 is the NPH3 domain; sequence TWWFDEVLVL…LDEQQQQQQQ (249 aa). Positions 421-492 form a coiled coil; that stretch reads QAIETLDEQQ…MEVIKKRSKS (72 aa). The disordered stretch occupies residues 485–506; the sequence is VIKKRSKSSSKGSNRSLPKLCS.

It belongs to the NPH3 family.

The protein operates within protein modification; protein ubiquitination. Its function is as follows. May act as a substrate-specific adapter of an E3 ubiquitin-protein ligase complex (CUL3-RBX1-BTB) which mediates the ubiquitination and subsequent proteasomal degradation of target proteins. This is BTB/POZ domain-containing protein At3g22104 from Arabidopsis thaliana (Mouse-ear cress).